Consider the following 301-residue polypeptide: Mitochondrial carnitine/acylcarnitine carrier protein (301 aa).

Position 2 is an N-acetylalanine (A2). Residues 2 to 12 are Cytoplasmic-facing; sequence ADQPKPISPLK. Solcar repeat units follow at residues 8 to 99, 108 to 196, and 207 to 293; these read ISPL…GKKL, LSYP…LKNI, and LSAP…AMKF. The chain crosses the membrane as a helical span at residues 13 to 31; the sequence is NLLAGGFGGVCLVFVGHPL. The Mitochondrial matrix portion of the chain corresponds to 32–73; that stretch reads DTVKVRLQTQPPSLPGQPPMYSGTFDCFRKTLFREGITGLYR. The chain crosses the membrane as a helical span at residues 74–93; the sequence is GMAAPIIGVTPMFAVCFFGF. The Cytoplasmic segment spans residues 94-112; sequence GLGKKLQQKHPEDVLSYPQ. Residues 113-131 traverse the membrane as a helical segment; it reads LFAAGMLSGVFTTGIMTPG. The Mitochondrial matrix portion of the chain corresponds to 132–170; sequence ERIKCLLQIQASSGESKYTGTLDCAKKLYQEFGIRGIYK. Residues K148 and K157 each carry the N6-acetyllysine modification. K170 carries the N6-acetyllysine; alternate modification. Residue K170 is modified to N6-succinyllysine; alternate. The helical transmembrane segment at 171 to 190 threads the bilayer; the sequence is GTVLTLMRDVPASGMYFMTY. The Cytoplasmic portion of the chain corresponds to 191 to 211; sequence EWLKNIFTPEGKRVSELSAPR. The chain crosses the membrane as a helical span at residues 212 to 230; that stretch reads ILVAGGIAGIFNWAVAIPP. At 231 to 267 the chain is on the mitochondrial matrix side; that stretch reads DVLKSRFQTAPPGKYPNGFRDVLRELIRDEGVTSLYK. A helical membrane pass occupies residues 268–287; it reads GFNAVMIRAFPANAACFLGF. The Cytoplasmic portion of the chain corresponds to 288–301; that stretch reads EVAMKFLNWATPNL.

This sequence belongs to the mitochondrial carrier (TC 2.A.29) family.

The protein resides in the mitochondrion inner membrane. It catalyses the reaction O-acetyl-(R)-carnitine(in) + (R)-carnitine(out) = O-acetyl-(R)-carnitine(out) + (R)-carnitine(in). It carries out the reaction an O-acyl-(R)-carnitine(in) + (R)-carnitine(out) = an O-acyl-(R)-carnitine(out) + (R)-carnitine(in). The catalysed reaction is O-propanoyl-(R)-carnitine(in) + (R)-carnitine(out) = O-propanoyl-(R)-carnitine(out) + (R)-carnitine(in). The enzyme catalyses O-hexadecanoyl-(R)-carnitine(in) + (R)-carnitine(out) = O-hexadecanoyl-(R)-carnitine(out) + (R)-carnitine(in). It catalyses the reaction O-octanoyl-(R)-carnitine(in) + (R)-carnitine(out) = O-octanoyl-(R)-carnitine(out) + (R)-carnitine(in). It carries out the reaction (R)-carnitine(in) = (R)-carnitine(out). In terms of biological role, mediates the electroneutral exchange of acylcarnitines (O-acyl-(R)-carnitine or L-acylcarnitine) of different acyl chain lengths (ranging from O-acetyl-(R)-carnitine to long-chain O-acyl-(R)-carnitines) with free carnitine ((R)-carnitine or L-carnitine) across the mitochondrial inner membrane, via a ping-pong mechanism. Key player in the mitochondrial oxidation pathway, it translocates the fatty acids in the form of acylcarnitines into the mitochondrial matrix, where the carnitine palmitoyltransferase 2 (CPT-2) activates them to undergo fatty acid beta-oxidation. Catalyzes the unidirectional transport (uniport) of carnitine at lower rates than the antiport (exchange). The polypeptide is Mitochondrial carnitine/acylcarnitine carrier protein (Homo sapiens (Human)).